We begin with the raw amino-acid sequence, 187 residues long: Elongation factor P (187 aa).

The protein belongs to the elongation factor P family.

It localises to the cytoplasm. It functions in the pathway protein biosynthesis; polypeptide chain elongation. In terms of biological role, involved in peptide bond synthesis. Stimulates efficient translation and peptide-bond synthesis on native or reconstituted 70S ribosomes in vitro. Probably functions indirectly by altering the affinity of the ribosome for aminoacyl-tRNA, thus increasing their reactivity as acceptors for peptidyl transferase. The polypeptide is Elongation factor P (Mycobacterium avium (strain 104)).